A 435-amino-acid polypeptide reads, in one-letter code: D-aminoacyl-tRNA deacylase (435 aa).

This sequence belongs to the DtdA deacylase family. As to quaternary structure, monomer. Requires Zn(2+) as cofactor.

It carries out the reaction a D-aminoacyl-tRNA + H2O = a tRNA + a D-alpha-amino acid + H(+). The enzyme catalyses glycyl-tRNA(Ala) + H2O = tRNA(Ala) + glycine + H(+). Functionally, D-aminoacyl-tRNA deacylase with broad substrate specificity. By recycling D-aminoacyl-tRNA to D-amino acids and free tRNA molecules, this enzyme counteracts the toxicity associated with the formation of D-aminoacyl-tRNA entities in vivo. The sequence is that of D-aminoacyl-tRNA deacylase from Methanosphaerula palustris (strain ATCC BAA-1556 / DSM 19958 / E1-9c).